The primary structure comprises 192 residues: Adenylate kinase (192 aa).

12 to 17 (GSGKTT) provides a ligand contact to ATP. Residues 33-62 (STGDLLRAEVAKDSELGKKIDKIISGGNLV) are NMP. Residues Thr34, Arg39, 60 to 62 (NLV), 87 to 90 (GYPR), and Gln94 contribute to the AMP site. Residues 129 to 135 (GRARGAD) are LID. ATP is bound at residue Arg130. Residues Arg132 and Arg144 each contribute to the AMP site. Arg172 serves as a coordination point for ATP.

Belongs to the adenylate kinase family. In terms of assembly, monomer.

The protein localises to the cytoplasm. The catalysed reaction is AMP + ATP = 2 ADP. Its pathway is purine metabolism; AMP biosynthesis via salvage pathway; AMP from ADP: step 1/1. Functionally, catalyzes the reversible transfer of the terminal phosphate group between ATP and AMP. Plays an important role in cellular energy homeostasis and in adenine nucleotide metabolism. This is Adenylate kinase from Campylobacter hominis (strain ATCC BAA-381 / DSM 21671 / CCUG 45161 / LMG 19568 / NCTC 13146 / CH001A).